Reading from the N-terminus, the 185-residue chain is Prorelaxin (185 aa).

Positions 1 to 24 (MPRLFLFHLLGVCLLLNQFSRAVA) are cleaved as a signal peptide. 3 cysteine pairs are disulfide-bonded: Cys-35-Cys-172, Cys-47-Cys-185, and Cys-171-Cys-176. Positions 56 to 157 (SLNQEDAPLK…LRSLGLDTHS (102 aa)) are cleaved as a propeptide — connecting peptide.

It belongs to the insulin family. Heterodimer of a B chain and an A chain linked by two disulfide bonds.

It is found in the secreted. In terms of biological role, relaxin is an ovarian hormone that acts with estrogen to produce dilatation of the birth canal in many mammals. May be involved in remodeling of connective tissues during pregnancy, promoting growth of pubic ligaments and ripening of the cervix. The chain is Prorelaxin (RLN) from Macaca mulatta (Rhesus macaque).